Here is a 473-residue protein sequence, read N- to C-terminus: MAPPAARLALLSAAALTLAARPAPSPGLGPECFTANGADYRGTQNWTALQGGKPCLFWNETFQHPYNTLKYPNGEGGLGEHNYCRNPDGDVSPWCYVAEHEDGVYWKYCEIPACQMPGNLGCYKDHGNPPPLTGTSKTSNKLTIQTCISFCRSQRFKFAGMESGYACFCGNNPDYWKYGEAASTECNSVCFGDHTQPCGGDGRIILFDTLVGACGGNYSAMSSVVYSPDFPDTYATGRVCYWTIRVPGASHIHFSFPLFDIRDSADMVELLDGYTHRVLARFHGRSRPPLSFNVSLDFVILYFFSDRINQAQGFAVLYQAVKEELPQERPAVNQTVAEVITEQANLSVSAARSSKVLYVITTSPSHPPQTVPGSNSWAPPMGAGSHRVEGWTVYGLATLLILTVTAIVAKILLHVTFKSHRVPASGDLRDCHQPGTSGEIWSIFYKPSTSISIFKKKLKGQSQQDDRNPLVSD.

Residues 1 to 19 form the signal peptide; the sequence is MAPPAARLALLSAAALTLA. At 21 to 392 the chain is on the extracellular side; that stretch reads RPAPSPGLGP…AGSHRVEGWT (372 aa). A Kringle domain is found at 31-114; it reads ECFTANGADY…YWKYCEIPAC (84 aa). Disulfide bonds link Cys32–Cys114, Cys55–Cys95, Cys84–Cys109, Cys122–Cys186, Cys147–Cys167, Cys151–Cys169, Cys190–Cys198, and Cys214–Cys240. Asn45 and Asn59 each carry an N-linked (GlcNAc...) asparagine glycan. The 95-residue stretch at 116–210 folds into the WSC domain; the sequence is MPGNLGCYKD…DGRIILFDTL (95 aa). In terms of domain architecture, CUB spans 214 to 321; sequence CGGNYSAMSS…QGFAVLYQAV (108 aa). N-linked (GlcNAc...) asparagine glycosylation is found at Asn217, Asn293, Asn333, and Asn345. The helical transmembrane segment at 393 to 413 threads the bilayer; that stretch reads VYGLATLLILTVTAIVAKILL. Topologically, residues 414–473 are cytoplasmic; it reads HVTFKSHRVPASGDLRDCHQPGTSGEIWSIFYKPSTSISIFKKKLKGQSQQDDRNPLVSD. Positions 414-473 are essential for apoptotic activity; that stretch reads HVTFKSHRVPASGDLRDCHQPGTSGEIWSIFYKPSTSISIFKKKLKGQSQQDDRNPLVSD.

In terms of assembly, forms a ternary complex with DKK1 and LRP6. Interacts with LRP6 in a DKK1-dependent manner. Interacts with DKK1 and RSPO1 (via FU repeats).

The protein resides in the cell membrane. In terms of biological role, receptor for Dickkopf proteins. Cooperates with DKK1/2 to inhibit Wnt/beta-catenin signaling by promoting the endocytosis of Wnt receptors LRP5 and LRP6. In the absence of DKK1, potentiates Wnt-beta-catenin signaling by maintaining LRP5 or LRP6 at the cell membrane. Can trigger apoptosis in a Wnt-independent manner and this apoptotic activity is inhibited upon binding of the ligand DKK1. Plays a role in limb development; attenuates Wnt signaling in the developing limb to allow normal limb patterning and can also negatively regulate bone formation. Modulates cell fate decisions in the developing cochlea with an inhibitory role in hair cell fate specification. The protein is Kremen protein 1 (KREMEN1) of Homo sapiens (Human).